Here is a 229-residue protein sequence, read N- to C-terminus: Orotidine 5'-phosphate decarboxylase (229 aa).

Substrate-binding positions include D10, K32, 59-68 (DLKFHDIPNT), T119, R180, Q189, G209, and R210. K61 acts as the Proton donor in catalysis.

This sequence belongs to the OMP decarboxylase family. Type 1 subfamily. In terms of assembly, homodimer.

It catalyses the reaction orotidine 5'-phosphate + H(+) = UMP + CO2. It functions in the pathway pyrimidine metabolism; UMP biosynthesis via de novo pathway; UMP from orotate: step 2/2. Functionally, catalyzes the decarboxylation of orotidine 5'-monophosphate (OMP) to uridine 5'-monophosphate (UMP). The protein is Orotidine 5'-phosphate decarboxylase of Legionella pneumophila (strain Lens).